The following is an 84-amino-acid chain: Sec-independent protein translocase protein TatA (84 aa).

A helical transmembrane segment spans residues 1-21; sequence MGGISIWQLLIIAVIVILLFG. The disordered stretch occupies residues 40-84; sequence KKAMSDEDKPADKKDADFEPKNIEQQKTEASAETTAETKKDKEQA. Basic and acidic residues-rich tracts occupy residues 42 to 66 and 75 to 84; these read AMSD…EQQK and AETKKDKEQA.

The protein belongs to the TatA/E family. As to quaternary structure, the Tat system comprises two distinct complexes: a TatABC complex, containing multiple copies of TatA, TatB and TatC subunits, and a separate TatA complex, containing only TatA subunits. Substrates initially bind to the TatABC complex, which probably triggers association of the separate TatA complex to form the active translocon.

The protein resides in the cell inner membrane. Its function is as follows. Part of the twin-arginine translocation (Tat) system that transports large folded proteins containing a characteristic twin-arginine motif in their signal peptide across membranes. TatA could form the protein-conducting channel of the Tat system. The polypeptide is Sec-independent protein translocase protein TatA (Vibrio atlanticus (strain LGP32) (Vibrio splendidus (strain Mel32))).